We begin with the raw amino-acid sequence, 337 residues long: 25S rRNA (adenine(2142)-N(1))-methyltransferase (337 aa).

Gly180 and Asp201 together coordinate S-adenosyl-L-methionine.

It belongs to the BMT2 family.

It localises to the nucleus. The protein localises to the nucleolus. The catalysed reaction is adenosine(2142) in 25S rRNA + S-adenosyl-L-methionine = N(1)-methyladenosine(2142) in 25S rRNA + S-adenosyl-L-homocysteine + H(+). S-adenosyl-L-methionine-dependent methyltransferase that specifically methylates the N(1) position of adenine 2142 in 25S rRNA. N(1)-methyladenine(2142) in 25S rRNA is present in helix 65, a region that accounts for most of the intersubunit surface of the large subunit. The chain is 25S rRNA (adenine(2142)-N(1))-methyltransferase from Saccharomyces cerevisiae (strain ATCC 204508 / S288c) (Baker's yeast).